An 88-amino-acid chain; its full sequence is Small ribosomal subunit protein bS20 (88 aa).

The protein belongs to the bacterial ribosomal protein bS20 family.

Binds directly to 16S ribosomal RNA. The chain is Small ribosomal subunit protein bS20 from Syntrophomonas wolfei subsp. wolfei (strain DSM 2245B / Goettingen).